The chain runs to 433 residues: tRNA-2-methylthio-N(6)-dimethylallyladenosine synthase (433 aa).

The 116-residue stretch at 4-119 (KKLFIQTLGC…ITQAIKTPKF (116 aa)) folds into the MTTase N-terminal domain. [4Fe-4S] cluster-binding residues include Cys-13, Cys-50, Cys-82, Cys-151, Cys-155, and Cys-158. Positions 137-370 (RNSIYKSYIN…QNRHSEILDE (234 aa)) constitute a Radical SAM core domain. Positions 373–433 (KKQENKTFKV…KRMVLYGEII (61 aa)) constitute a TRAM domain.

The protein belongs to the methylthiotransferase family. MiaB subfamily. Monomer. The cofactor is [4Fe-4S] cluster.

It localises to the cytoplasm. It catalyses the reaction N(6)-dimethylallyladenosine(37) in tRNA + (sulfur carrier)-SH + AH2 + 2 S-adenosyl-L-methionine = 2-methylsulfanyl-N(6)-dimethylallyladenosine(37) in tRNA + (sulfur carrier)-H + 5'-deoxyadenosine + L-methionine + A + S-adenosyl-L-homocysteine + 2 H(+). Functionally, catalyzes the methylthiolation of N6-(dimethylallyl)adenosine (i(6)A), leading to the formation of 2-methylthio-N6-(dimethylallyl)adenosine (ms(2)i(6)A) at position 37 in tRNAs that read codons beginning with uridine. In Campylobacter jejuni subsp. doylei (strain ATCC BAA-1458 / RM4099 / 269.97), this protein is tRNA-2-methylthio-N(6)-dimethylallyladenosine synthase.